The sequence spans 405 residues: Na(+)-translocating NADH-quinone reductase subunit F (405 aa).

Residues 3 to 23 (IILGIVMFTVIVLVLALMILF) traverse the membrane as a helical segment. The 2Fe-2S ferredoxin-type domain occupies 32–124 (GDITIKVNGE…DMDIEVPEEV (93 aa)). The [2Fe-2S] cluster site is built by C67, C73, C76, and C108. Residues 127–267 (VKKWECTVIS…SGPFGEFFAK (141 aa)) enclose the FAD-binding FR-type domain. The catalytic stretch occupies residues 270-387 (DAEMVFIGGG…PIMNQSVIKM (118 aa)).

It belongs to the NqrF family. In terms of assembly, composed of six subunits; NqrA, NqrB, NqrC, NqrD, NqrE and NqrF. Requires [2Fe-2S] cluster as cofactor. FAD is required as a cofactor.

It is found in the cell inner membrane. The catalysed reaction is a ubiquinone + n Na(+)(in) + NADH + H(+) = a ubiquinol + n Na(+)(out) + NAD(+). NQR complex catalyzes the reduction of ubiquinone-1 to ubiquinol by two successive reactions, coupled with the transport of Na(+) ions from the cytoplasm to the periplasm. The first step is catalyzed by NqrF, which accepts electrons from NADH and reduces ubiquinone-1 to ubisemiquinone by a one-electron transfer pathway. The sequence is that of Na(+)-translocating NADH-quinone reductase subunit F from Neisseria meningitidis serogroup B (strain ATCC BAA-335 / MC58).